Reading from the N-terminus, the 127-residue chain is MADVTKDDVVEFIANMSVLELSELVKELEEKFGVSAAAPVAMMAAGGAADAGAAAEEQTEFDVILEAAGDKKIGVIKEVRAITGLGLKEAKALVDEAPKPVKEGIVKEEAEKIKAQLEAAGAQVSVK.

The protein belongs to the bacterial ribosomal protein bL12 family. Homodimer. Part of the ribosomal stalk of the 50S ribosomal subunit. Forms a multimeric L10(L12)X complex, where L10 forms an elongated spine to which 2 to 4 L12 dimers bind in a sequential fashion. Binds GTP-bound translation factors.

Forms part of the ribosomal stalk which helps the ribosome interact with GTP-bound translation factors. Is thus essential for accurate translation. The polypeptide is Large ribosomal subunit protein bL12 (Desulforapulum autotrophicum (strain ATCC 43914 / DSM 3382 / VKM B-1955 / HRM2) (Desulfobacterium autotrophicum)).